Here is a 90-residue protein sequence, read N- to C-terminus: Probable Fe(2+)-trafficking protein (90 aa).

It belongs to the Fe(2+)-trafficking protein family.

Its function is as follows. Could be a mediator in iron transactions between iron acquisition and iron-requiring processes, such as synthesis and/or repair of Fe-S clusters in biosynthetic enzymes. The chain is Probable Fe(2+)-trafficking protein from Pasteurella multocida (strain Pm70).